The sequence spans 185 residues: Putative manganese efflux pump MntP (185 aa).

6 consecutive transmembrane segments (helical) span residues 4-24 (LFIGELVSLSIMAFALGTDAF), 40-60 (IFHIGVVIGLFHVMMPLAGMA), 64-84 (LLSGFLGMLAVYIGGSLLFIL), 108-128 (LLLFAIGVSLDSFSVGLSLGM), 134-154 (FLAVTLFGVFSTVLTWAGLLA), and 165-185 (YSEALGGAILIGFGLKLLLPV).

This sequence belongs to the MntP (TC 9.B.29) family.

It localises to the cell membrane. In terms of biological role, probably functions as a manganese efflux pump. The polypeptide is Putative manganese efflux pump MntP (Bacillus velezensis (strain DSM 23117 / BGSC 10A6 / LMG 26770 / FZB42) (Bacillus amyloliquefaciens subsp. plantarum)).